A 253-amino-acid polypeptide reads, in one-letter code: Probable transcriptional regulatory protein RAF_ORF0717 (253 aa).

Residues 1–21 (MAGHSKFKNIQHRKGAQDKKR) form a disordered region.

The protein belongs to the TACO1 family.

The protein localises to the cytoplasm. The chain is Probable transcriptional regulatory protein RAF_ORF0717 from Rickettsia africae (strain ESF-5).